Consider the following 295-residue polypeptide: 3-methyl-2-oxobutanoate hydroxymethyltransferase (295 aa).

Positions 1-30 (MTSGRAMSPEETAPYGTGPARAESAPDAPA) are disordered. Positions 76 and 115 each coordinate Mg(2+). Residues 76-77 (DS), D115, and K145 contribute to the 3-methyl-2-oxobutanoate site. E147 provides a ligand contact to Mg(2+). E213 serves as the catalytic Proton acceptor.

This sequence belongs to the PanB family. Homodecamer; pentamer of dimers. The cofactor is Mg(2+).

The protein resides in the cytoplasm. The enzyme catalyses 3-methyl-2-oxobutanoate + (6R)-5,10-methylene-5,6,7,8-tetrahydrofolate + H2O = 2-dehydropantoate + (6S)-5,6,7,8-tetrahydrofolate. It participates in cofactor biosynthesis; (R)-pantothenate biosynthesis; (R)-pantoate from 3-methyl-2-oxobutanoate: step 1/2. Catalyzes the reversible reaction in which hydroxymethyl group from 5,10-methylenetetrahydrofolate is transferred onto alpha-ketoisovalerate to form ketopantoate. This is 3-methyl-2-oxobutanoate hydroxymethyltransferase from Nocardioides sp. (strain ATCC BAA-499 / JS614).